The following is a 199-amino-acid chain: NAD(P)H dehydrogenase (quinone) (199 aa).

The Flavodoxin-like domain occupies 4 to 190; that stretch reads VLVLYYSAYG…AGARYQGKTI (187 aa). Residues 10–15 and 78–80 each bind FMN; these read SAYGHI and TRF. Y12 lines the NAD(+) pocket. W98 serves as a coordination point for substrate. Residues 113–119 and H134 each bind FMN; that span reads STATQHG.

It belongs to the WrbA family. Requires FMN as cofactor.

The catalysed reaction is a quinone + NADH + H(+) = a quinol + NAD(+). It catalyses the reaction a quinone + NADPH + H(+) = a quinol + NADP(+). In Rhodopseudomonas palustris (strain TIE-1), this protein is NAD(P)H dehydrogenase (quinone).